The following is a 378-amino-acid chain: Filamin-binding LIM protein 1 (378 aa).

The filamin-binding stretch occupies residues 1-69 (MASKPEKRVA…RSWMPPGRAA (69 aa)). Residues 38 to 179 (WPGRPWESAP…PPPEEPVSFP (142 aa)) are disordered. Pro residues predominate over residues 103–115 (LPPPPPPPAADLP). LIM zinc-binding domains lie at 186-247 (DICA…TLEK), 248-305 (CGKC…RKFA), and 306-375 (PVCS…RSAA). The tract at residues 281 to 378 (IGDESFALDS…HVKRSAAGCC (98 aa)) is PLEKHC1-binding.

In terms of assembly, interacts with PLEKHC1, FLNA, FLNB and FLNC. Interacts with NKX2-5.

The protein localises to the cell junction. It localises to the focal adhesion. It is found in the cytoplasm. The protein resides in the cytoskeleton. Its subcellular location is the stress fiber. In terms of biological role, serves as an anchoring site for cell-ECM adhesion proteins and filamin-containing actin filaments. Is implicated in cell shape modulation (spreading) and motility. May participate in the regulation of filamin-mediated cross-linking and stabilization of actin filaments. May also regulate the assembly of filamin-containing signaling complexes that control actin assembly. Promotes dissociation of FLNA from ITGB3 and ITGB7. Promotes activation of integrins and regulates integrin-mediated cell-cell adhesion. The sequence is that of Filamin-binding LIM protein 1 (FBLIM1) from Bos taurus (Bovine).